Here is a 207-residue protein sequence, read N- to C-terminus: Protein FAM177A1 (207 aa).

Position 1 is an N-acetylmethionine (methionine 1). Serine 65 carries the post-translational modification Phosphoserine. Threonine 66 carries the phosphothreonine modification. A coiled-coil region spans residues 131–170 (IDEYYRMKKEEEEEEEENRMSEEAERQYQQNKLQADSIVQ). The disordered stretch occupies residues 142–176 (EEEEEENRMSEEAERQYQQNKLQADSIVQTDQPET). Polar residues predominate over residues 157–176 (QYQQNKLQADSIVQTDQPET).

It belongs to the FAM177 family.

This is Protein FAM177A1 (Fam177a1) from Mus musculus (Mouse).